The chain runs to 204 residues: Putative copper-binding protein (204 aa).

Cu cation-binding residues include Cys77, Cys81, and His166.

This sequence belongs to the SCO1/2 family.

In Stutzerimonas stutzeri (Pseudomonas stutzeri), this protein is Putative copper-binding protein (scoP).